A 917-amino-acid chain; its full sequence is Nitrate reductase [NADH] 2 (917 aa).

Residues 1–72 form a disordered region; sequence MAASVDNRQY…SEDENETHNS (72 aa). A compositionally biased stretch (polar residues) spans 37-47; it reads AHQNQTTNQTV. Residues 57 to 67 show a composition bias toward acidic residues; that stretch reads DDEDVSSEDEN. Cysteine 191 lines the Mo-molybdopterin pocket. Positions 542–617 constitute a Cytochrome b5 heme-binding domain; that stretch reads AKMYSMSEVK…LEDYRIGELI (76 aa). Heme contacts are provided by histidine 577 and histidine 600. One can recognise an FAD-binding FR-type domain in the interval 660–772; that stretch reads RAKVPVQLVE…KGPLGHVEYL (113 aa). FAD is bound by residues 712–715, 729–733, phenylalanine 734, phenylalanine 741, 746–748, and threonine 799; these read RAYT, VVKIY, and LMS.

The protein belongs to the nitrate reductase family. Homodimer. The cofactor is FAD. Heme serves as cofactor. Mo-molybdopterin is required as a cofactor. In terms of tissue distribution, root, leaf, and shoot.

The enzyme catalyses nitrite + NAD(+) + H2O = nitrate + NADH + H(+). In terms of biological role, nitrate reductase is a key enzyme involved in the first step of nitrate assimilation in plants, fungi and bacteria. The polypeptide is Nitrate reductase [NADH] 2 (NIA2) (Arabidopsis thaliana (Mouse-ear cress)).